A 264-amino-acid chain; its full sequence is uncharacterized protein (264 aa).

A signal peptide spans M1–G22. C23 carries N-palmitoyl cysteine lipidation. C23 carries S-diacylglycerol cysteine lipidation.

Belongs to the staphylococcal tandem lipoprotein family.

It localises to the cell membrane. This is an uncharacterized protein from Staphylococcus aureus (strain N315).